A 488-amino-acid polypeptide reads, in one-letter code: Inosine-5'-monophosphate dehydrogenase (488 aa).

CBS domains lie at 95–153 and 157–216; these read VISN…SIKI and MTQE…AKDE. NAD(+)-binding positions include Asp250 and 300–302; that span reads GIG. Residues Gly302 and Gly304 each coordinate K(+). Residue Ser305 coordinates IMP. Cys307 serves as a coordination point for K(+). Cys307 functions as the Thioimidate intermediate in the catalytic mechanism. Residues 340-342, 363-364, and 387-391 contribute to the IMP site; these read DGG, GS, and YRGMG. Residue Arg403 is the Proton acceptor of the active site. IMP is bound at residue Glu417. The interval 468–488 is disordered; it reads GLAESHPHNIQITKESPNYSF. K(+) contacts are provided by Glu471, Ser472, and His473. Polar residues predominate over residues 475-488; it reads HNIQITKESPNYSF.

It belongs to the IMPDH/GMPR family. Homotetramer. K(+) is required as a cofactor.

It carries out the reaction IMP + NAD(+) + H2O = XMP + NADH + H(+). It functions in the pathway purine metabolism; XMP biosynthesis via de novo pathway; XMP from IMP: step 1/1. With respect to regulation, mycophenolic acid (MPA) is a non-competitive inhibitor that prevents formation of the closed enzyme conformation by binding to the same site as the amobile flap. In contrast, mizoribine monophosphate (MZP) is a competitive inhibitor that induces the closed conformation. MPA is a potent inhibitor of mammalian IMPDHs but a poor inhibitor of the bacterial enzymes. MZP is a more potent inhibitor of bacterial IMPDH. Functionally, catalyzes the conversion of inosine 5'-phosphate (IMP) to xanthosine 5'-phosphate (XMP), the first committed and rate-limiting step in the de novo synthesis of guanine nucleotides, and therefore plays an important role in the regulation of cell growth. The chain is Inosine-5'-monophosphate dehydrogenase from Staphylococcus aureus (strain MW2).